The chain runs to 245 residues: 1-(5-phosphoribosyl)-5-[(5-phosphoribosylamino)methylideneamino] imidazole-4-carboxamide isomerase (245 aa).

Residue aspartate 7 is the Proton acceptor of the active site. Residue aspartate 129 is the Proton donor of the active site.

Belongs to the HisA/HisF family.

It is found in the cytoplasm. The catalysed reaction is 1-(5-phospho-beta-D-ribosyl)-5-[(5-phospho-beta-D-ribosylamino)methylideneamino]imidazole-4-carboxamide = 5-[(5-phospho-1-deoxy-D-ribulos-1-ylimino)methylamino]-1-(5-phospho-beta-D-ribosyl)imidazole-4-carboxamide. It functions in the pathway amino-acid biosynthesis; L-histidine biosynthesis; L-histidine from 5-phospho-alpha-D-ribose 1-diphosphate: step 4/9. This is 1-(5-phosphoribosyl)-5-[(5-phosphoribosylamino)methylideneamino] imidazole-4-carboxamide isomerase from Shewanella sp. (strain MR-7).